Reading from the N-terminus, the 483-residue chain is M protein, serotype 6 (483 aa).

A signal peptide spans 1-42 (MAKNNTNRHYSLRKLKKGTASVAVALSVIGAGLVVNTNEVSA). The stretch at 54–171 (DKARELLNKY…IGTLKKTLDE (118 aa)) forms a coiled coil. 8 consecutive repeat copies span residues 69 to 75 (MLQANND), 76 to 82 (KLTTENN), 83 to 89 (NLTDQNK), 90 to 96 (NLTTENK), 97 to 103 (NLTDQNK), 104 to 110 (NLTTENK), 111 to 117 (NLTDQNK), and 118 to 124 (NLTTENK). Residues 69 to 138 (MLQANNDKLT…EENRLTTENK (70 aa)) are 10 X 7 AA approximate tandem repeats of [KMNR]-L-[TQ]-[TDA]-[ENQ]-N-[NDK]. The span at 74–87 (NDKLTTENNNLTDQ) shows a compositional bias: polar residues. The tract at residues 74-157 (NDKLTTENNN…EEEAANKERE (84 aa)) is disordered. Residues 88-113 (NKNLTTENKNLTDQNKNLTTENKNLT) are compositionally biased toward low complexity. Composition is skewed to basic and acidic residues over residues 122–135 (ENKELKAEENRLTT) and 143–157 (KLSEAEEEAANKERE). The 9-1; approximate repeat unit spans residues 125–131 (ELKAEEN). Repeat copies occupy residues 132-138 (RLTTENK), 157-181 (ENKEAIGTLKKTLDETVKDKIAKEQ), 182-206 (ESKETIGTLKKTLDETVKDKIAKEQ), 207-231 (ESKETIGTLKKTLDETVKDKIAKEQ), and 232-256 (ESKETIGTLKKILDETVKDKIAREQ). A 4.5 X 25 AA tandem repeats of E-[NS]-K-E-[TA]-I-G-T-L-K-K-[TI]-L-D-E-T-V-K-D-K-I-A-[KR]-E-Q region spans residues 157–269 (ENKEAIGTLK…QDIGALKQEL (113 aa)). Disordered regions lie at residues 255–298 (EQKS…EAKK) and 314–345 (VKEEKQISDASRQGLRRDLDASREAKKQVEKA). A 5-2; truncated repeat occupies 257–269 (KSKQDIGALKQEL). Composition is skewed to basic and acidic residues over residues 268–298 (ELAKKDEGNKVSEASRKGLRRDLDASREAKK) and 328–345 (LRRDLDASREAKKQVEKA). C repeat units lie at residues 270 to 304 (AKKDEGNKVSEASRKGLRRDLDASREAKKQVEKDL) and 312 to 346 (DKVKEEKQISDASRQGLRRDLDASREAKKQVEKAL). Residues 279–347 (SEASRKGLRR…AKKQVEKALE (69 aa)) form a binding to CD46 region. A two directly repeated 27 amino acid blocks separated by 15 amino acids region spans residues 279 to 347 (SEASRKGLRR…AKKQVEKALE (69 aa)). A coiled-coil region spans residues 280–408 (EASRKGLRRD…LAKLRAGKAS (129 aa)). The tract at residues 348-411 (EANSKLAALE…LRAGKASDSQ (64 aa)) is hydrophilic. D repeat units follow at residues 379–384 (AKLEAE), 385–390 (AKALKE), 393–398 (AKQAEE), and 400–405 (AKLRAG). The tract at residues 400-455 (AKLRAGKASDSQTPDAKPGNKVVPGKGQAPQAGTKPNQNKAPMKETKRQLPSTGET) is disordered. The LPXTG sorting signal motif lies at 449-453 (LPSTG). Thr-452 carries the post-translational modification Pentaglycyl murein peptidoglycan amidated threonine. Residues 453–483 (GETANPFFTAAALTVMATAGVAAVVKRKEEN) constitute a propeptide, removed by sortase.

The protein belongs to the M protein family.

It is found in the secreted. It localises to the cell wall. Functionally, mediates the attachment of S.pyogenes to skin epithelial cells through the binding of the human membrane cofactor protein CD46. Also binds to the factor H and factor H-like protein 1. These interactions could contribute to the fact that the M6 protein protects the bacterium from the phagocytosis by regulating the complement activation on the bacterial surface. In Streptococcus pyogenes, this protein is M protein, serotype 6 (emm6).